A 538-amino-acid chain; its full sequence is MAQKPLRLLACGDVEGKFDILFNRVQAIQKKSGNFDLLLCVGNFFGSTQDAEWEEYKTGIKKAPIQTYVLGANNQETVKYFQDADGCELAENITYLGRKGIFTGSSGLQIVYLSGTESLNEPVPGYSFSPKDVSSLRMMLCTTSQFKGVDILLTSPWPKCVGNFGNSSGEVDTKKCGSALVSSLATGLKPRYHFAALEKTYYERLPYRNHIILQENAQHATRFIALANVGNPEKKKYLYAFSIVPMKLMDAAELVKQPPDVTENPYRKSGQEASIGKQILAPVEESACQFFFDLNEKQGRKRSSTGRDSKSSPHPKQPRKPPQPPGPCWFCLASPEVEKHLVVNIGTHCYLALAKGGLSDDHVLILPIGHYQSVVELSAEVVEEVEKYKATLRRFFKSRGKWCVVFERNYKSHHLQLQVIPVPISCSTTDDIKDAFITQAQEQQIELLEIPEHSDIKQIAQPGAAYFYVELDTGEKLFHRIKKNFPLQFGREVLASEAILNVPDKSDWRQCQISKEDEETLARRFRKDFEPYDFTLDD.

A disordered region spans residues 298–324; the sequence is QGRKRSSTGRDSKSSPHPKQPRKPPQP.

It belongs to the CWF19 family. Expressed in many brain regions, including cerebellum, thalamus and occipital, parietal and temporal lobes (at protein level). Also expressed in the spinal cord (at protein level).

The sequence is that of CWF19-like protein 1 (CWF19L1) from Homo sapiens (Human).